A 396-amino-acid polypeptide reads, in one-letter code: Lipopolysaccharide assembly protein B (396 aa).

The chain crosses the membrane as a helical span at residues 1–20 (MIELLFLLLPIAAAYGWYMG). Topologically, residues 21–396 (RRSAKKDQDD…IKPVSNQEHN (376 aa)) are cytoplasmic. 4 TPR repeats span residues 35–68 (LSRD…QEIE), 77–109 (FEAE…SPNY), 149–182 (ENAL…KPQE), and 221–254 (VRAS…NPDY). Fe cation contacts are provided by Cys-364, Cys-367, Cys-378, and Cys-381.

The protein belongs to the LapB family.

It is found in the cell inner membrane. Its function is as follows. Modulates cellular lipopolysaccharide (LPS) levels by regulating LpxC, which is involved in lipid A biosynthesis. May act by modulating the proteolytic activity of FtsH towards LpxC. May also coordinate assembly of proteins involved in LPS synthesis at the plasma membrane. The polypeptide is Lipopolysaccharide assembly protein B (Haemophilus influenzae (strain ATCC 51907 / DSM 11121 / KW20 / Rd)).